Here is a 713-residue protein sequence, read N- to C-terminus: Calpastatin (713 aa).

Positions 1 to 21 are enriched in low complexity; that stretch reads MSRPGPKPAASSRPRRGAAAS. The tract at residues 1 to 152 is disordered; sequence MSRPGPKPAA…SADGESVAGG (152 aa). Over residues 47–64 the composition is skewed to polar residues; it reads VTASSAATGTSPRMSTTG. Ser-57 bears the Phosphoserine mark. Residue Lys-69 forms a Glycyl lysine isopeptide (Lys-Gly) (interchain with G-Cter in SUMO2) linkage. Lys-86 carries the post-translational modification N6-acetyllysine. Residues 120-129 show a composition bias toward polar residues; that stretch reads SRSNEQIVSE. 2 positions are modified to phosphoserine: Ser-122 and Ser-171. Thr-173 carries the post-translational modification Phosphothreonine. One copy of the Inhibitory domain 1 repeat lies at 208 to 260; the sequence is TNKDDPPYTGPVVLDPMDSTYLEALGIKEGTIPPEYRKLLEKNEAITGPLPDS. The tract at residues 253–402 is disordered; that stretch reads ITGPLPDSPK…PEETSKCLSE (150 aa). 2 positions are modified to phosphoserine: Ser-260 and Ser-281. Composition is skewed to polar residues over residues 275–285, 294–304, and 326–346; these read SDFTCSSPTGK, GESSKAQSAGV, and QALQ…QSHL. An Inhibitory domain 2 repeat occupies 341-393; sequence DPQSHLRQAKQVKEAKAKEERQEKCGEDEDTVPAEYRLKPAKDKDGKPLLPEP. Basic and acidic residues-rich tracts occupy residues 351-365 and 376-387; these read QVKE…QEKC and YRLKPAKDKDGK. 4 positions are modified to phosphoserine: Ser-401, Ser-403, Ser-410, and Ser-445. A disordered region spans residues 442–507; that stretch reads LARSLGTRKE…PLLPKEAEEQ (66 aa). A compositionally biased stretch (basic and acidic residues) spans 448–505; it reads TRKEDPEDEKSLVDKVKEKAKEEDHEKLGEKEETIPPDYRLEIVKDKDGKPLLPKEAE. Residues 451 to 504 form an Inhibitory domain 3 repeat; that stretch reads EDPEDEKSLVDKVKEKAKEEDHEKLGEKEETIPPDYRLEIVKDKDGKPLLPKEA. Ser-521 and Ser-532 each carry phosphoserine. The span at 544–558 shows a compositional bias: polar residues; the sequence is VSETVSQVPAPSNHT. The tract at residues 544–713 is disordered; that stretch reads VSETVSQVPA…PKPKVDEDAT (170 aa). Phosphoserine is present on residues Ser-580 and Ser-582. An Inhibitory domain 4 repeat occupies 588–641; sequence PDPDENKPLDDKVKEKIKAEHSEKLGERDDTIPPEYRHLLDNDGKDKPEKPLTK. Basic and acidic residues-rich tracts occupy residues 588–648 and 687–713; these read PDPD…KLGQ and SKNE…EDAT.

This sequence belongs to the protease inhibitor I27 (calpastatin) family.

Functionally, specific inhibition of calpain (calcium-dependent cysteine protease). Plays a key role in postmortem tenderization of meat and have been proposed to be involved in muscle protein degradation in living tissue. The protein is Calpastatin (Cast) of Rattus norvegicus (Rat).